Reading from the N-terminus, the 403-residue chain is TPR repeat-containing protein Synpcc7942_0270 (403 aa).

TPR repeat units follow at residues 208 to 243, 244 to 282, 283 to 316, 317 to 350, and 351 to 387; these read AYLC…PEPA, VRYE…AIHK, LGAW…APQA, TVAL…DPND, and PSLY…QGSP.

The protein is TPR repeat-containing protein Synpcc7942_0270 of Synechococcus elongatus (strain ATCC 33912 / PCC 7942 / FACHB-805) (Anacystis nidulans R2).